We begin with the raw amino-acid sequence, 297 residues long: Elongation factor Ts (297 aa).

The interval 82–85 (TDFV) is involved in Mg(2+) ion dislocation from EF-Tu. The segment covering 223–265 (AQTAAAAETAPPEVSEPEPAAAVTAEEPTPEPVAAAEQPAEPV) has biased composition (low complexity). Positions 223 to 297 (AQTAAAAETA…GKSRSNKKKK (75 aa)) are disordered. Residues 286-297 (SGGKSRSNKKKK) are compositionally biased toward basic residues.

Belongs to the EF-Ts family.

It localises to the cytoplasm. In terms of biological role, associates with the EF-Tu.GDP complex and induces the exchange of GDP to GTP. It remains bound to the aminoacyl-tRNA.EF-Tu.GTP complex up to the GTP hydrolysis stage on the ribosome. This Thermosynechococcus vestitus (strain NIES-2133 / IAM M-273 / BP-1) protein is Elongation factor Ts.